Consider the following 353-residue polypeptide: Tetraacyldisaccharide 4'-kinase (353 aa).

T49–T56 lines the ATP pocket.

It belongs to the LpxK family.

It catalyses the reaction a lipid A disaccharide + ATP = a lipid IVA + ADP + H(+). The protein operates within glycolipid biosynthesis; lipid IV(A) biosynthesis; lipid IV(A) from (3R)-3-hydroxytetradecanoyl-[acyl-carrier-protein] and UDP-N-acetyl-alpha-D-glucosamine: step 6/6. Transfers the gamma-phosphate of ATP to the 4'-position of a tetraacyldisaccharide 1-phosphate intermediate (termed DS-1-P) to form tetraacyldisaccharide 1,4'-bis-phosphate (lipid IVA). This is Tetraacyldisaccharide 4'-kinase from Chlorobium phaeovibrioides (strain DSM 265 / 1930) (Prosthecochloris vibrioformis (strain DSM 265)).